Consider the following 1217-residue polypeptide: ATP-dependent helicase/nuclease subunit A (1217 aa).

The UvrD-like helicase ATP-binding domain occupies Val-10 to Arg-475. Ala-31–Thr-38 contributes to the ATP binding site. The UvrD-like helicase C-terminal domain occupies Asp-491–Gly-786.

It belongs to the helicase family. AddA subfamily. Heterodimer of AddA and AddB/RexB. Mg(2+) serves as cofactor.

It catalyses the reaction Couples ATP hydrolysis with the unwinding of duplex DNA by translocating in the 3'-5' direction.. The catalysed reaction is ATP + H2O = ADP + phosphate + H(+). In terms of biological role, the heterodimer acts as both an ATP-dependent DNA helicase and an ATP-dependent, dual-direction single-stranded exonuclease. Recognizes the chi site generating a DNA molecule suitable for the initiation of homologous recombination. The AddA nuclease domain is required for chi fragment generation; this subunit has the helicase and 3' -&gt; 5' nuclease activities. In Staphylococcus aureus (strain bovine RF122 / ET3-1), this protein is ATP-dependent helicase/nuclease subunit A.